Here is a 281-residue protein sequence, read N- to C-terminus: UPF0162 protein PD_0709 (281 aa).

TPR repeat units follow at residues 193–226 (VRIL…VPNQ) and 227–260 (PEAL…YPST).

Belongs to the UPF0162 family.

This is UPF0162 protein PD_0709 from Xylella fastidiosa (strain Temecula1 / ATCC 700964).